The following is an 871-amino-acid chain: Translation initiation factor IF-2 (871 aa).

The tract at residues 1–242 (MVDTKNPGDK…PAAKPAPAKQ (242 aa)) is disordered. The span at 68–91 (PASARTPAAKAPPARAATPAAPRA) shows a compositional bias: low complexity. Residues 115-174 (AKVRAEEERRIAEAEAARRNSKEGIEQAEREAAEARRKAEEERHRQEEEAKRKAEIEAKR) are compositionally biased toward basic and acidic residues. Low complexity-rich tracts occupy residues 182-206 (KPAP…AVAA) and 225-241 (ARPV…APAK). The tr-type G domain maps to 367-538 (PRSPVVTVMG…SLQADLLDLK (172 aa)). Positions 376-383 (GHVDHGKT) are G1. 376–383 (GHVDHGKT) contributes to the GTP binding site. Positions 401–405 (GITQH) are G2. Residues 424-427 (DTPG) are G3. Residues 424–428 (DTPGH) and 478–481 (NKID) each bind GTP. The interval 478-481 (NKID) is G4. The interval 514 to 516 (SAK) is G5.

It belongs to the TRAFAC class translation factor GTPase superfamily. Classic translation factor GTPase family. IF-2 subfamily.

Its subcellular location is the cytoplasm. Its function is as follows. One of the essential components for the initiation of protein synthesis. Protects formylmethionyl-tRNA from spontaneous hydrolysis and promotes its binding to the 30S ribosomal subunits. Also involved in the hydrolysis of GTP during the formation of the 70S ribosomal complex. The sequence is that of Translation initiation factor IF-2 from Nitrobacter winogradskyi (strain ATCC 25391 / DSM 10237 / CIP 104748 / NCIMB 11846 / Nb-255).